We begin with the raw amino-acid sequence, 407 residues long: Methylthioribose kinase (407 aa).

Residues asparagine 40, lysine 57, and 111–113 (EDL) contribute to the ATP site. Aspartate 229 serves as a coordination point for substrate. Position 246-248 (246-248 (DAE)) interacts with ATP. Arginine 344 lines the substrate pocket.

The protein belongs to the methylthioribose kinase family. Homodimer.

The catalysed reaction is 5-(methylsulfanyl)-D-ribose + ATP = 5-(methylsulfanyl)-alpha-D-ribose 1-phosphate + ADP + H(+). It functions in the pathway amino-acid biosynthesis; L-methionine biosynthesis via salvage pathway; S-methyl-5-thio-alpha-D-ribose 1-phosphate from S-methyl-5'-thioadenosine (hydrolase route): step 2/2. Functionally, catalyzes the phosphorylation of methylthioribose into methylthioribose-1-phosphate. The polypeptide is Methylthioribose kinase (Yersinia pestis bv. Antiqua (strain Angola)).